The sequence spans 218 residues: Claudin-5 (218 aa).

Residues 1–7 lie on the Cytoplasmic side of the membrane; sequence MGSAALE. The helical transmembrane segment at 8 to 28 threads the bilayer; it reads ILGLVLCLVGWVGLILACGLP. Over 29–81 the chain is Extracellular; it reads MWQVTAFLDHNIVTAQTTWKGLWMSCVVQSTGHMQCKVYESVLALSAEVQAAR. A helical membrane pass occupies residues 82 to 102; the sequence is ALTVGAVLLALVALFVTLTGA. The Cytoplasmic segment spans residues 103-123; the sequence is QCTTCVAPGPVKARVALTGGA. The chain crosses the membrane as a helical span at residues 124–144; it reads LYAVCGLLALVPLCWFANIVV. At 145–160 the chain is on the extracellular side; the sequence is REFYDPTVPVSQKYEL. Residues 161-181 traverse the membrane as a helical segment; that stretch reads GAALYIGWAASALLMCGGGLV. Residues 182–218 are Cytoplasmic-facing; that stretch reads CCGAWVCTGRPEFSFPVKYSAPRRPTANGDYDKKNYV. The tract at residues 217–218 is interactions with TJP1, TJP2 and TJP3; that stretch reads YV.

It belongs to the claudin family. In terms of assembly, interacts with MPDZ. Directly interacts with TJP1/ZO-1, TJP2/ZO-2 and TJP3/ZO-3. In terms of tissue distribution, widely expressed with highest levels in the lung.

It localises to the cell junction. The protein localises to the tight junction. The protein resides in the cell membrane. Plays a major role in tight junction-specific obliteration of the intercellular space, through calcium-independent cell-adhesion activity. The chain is Claudin-5 (Cldn5) from Mus musculus (Mouse).